A 107-amino-acid chain; its full sequence is Nucleoid-associated protein BLi00029/BL02358 (107 aa).

The tract at residues 1–27 (MRGGMGNMQKMMKQMQKMQKDMQKAQE) is disordered. Low complexity predominate over residues 8-17 (MQKMMKQMQK). Basic and acidic residues predominate over residues 18–27 (MQKDMQKAQE).

This sequence belongs to the YbaB/EbfC family. Homodimer.

Its subcellular location is the cytoplasm. The protein localises to the nucleoid. Binds to DNA and alters its conformation. May be involved in regulation of gene expression, nucleoid organization and DNA protection. The protein is Nucleoid-associated protein BLi00029/BL02358 of Bacillus licheniformis (strain ATCC 14580 / DSM 13 / JCM 2505 / CCUG 7422 / NBRC 12200 / NCIMB 9375 / NCTC 10341 / NRRL NRS-1264 / Gibson 46).